The chain runs to 752 residues: Double zinc ribbon and ankyrin repeat-containing protein 1 (752 aa).

A phosphoserine mark is found at Ser160 and Ser182. Residues 164–187 (IPAYGGGSGSRPPTRQSQSPGFAH) are disordered. The span at 174–183 (RPPTRQSQSP) shows a compositional bias: polar residues. DZANK-type zinc fingers lie at residues 211–270 (CAHC…CVVC) and 339–387 (CYRC…GSCG). ANK repeat units lie at residues 605–636 (ENRL…DPNC) and 640–669 (DNRP…DIDQ).

Interacts with NINL isoform 2. Associates with DYNC1H1 and multiple dynein intermediate and light chains as well as actin-binding proteins.

It localises to the cytoplasm. It is found in the cytoskeleton. The protein localises to the microtubule organizing center. The protein resides in the centrosome. Its subcellular location is the cilium basal body. Its function is as follows. Involved in vesicle transport in photoreceptor cells. The polypeptide is Double zinc ribbon and ankyrin repeat-containing protein 1 (Homo sapiens (Human)).